A 419-amino-acid chain; its full sequence is Akuammiline synthase 1 (419 aa).

Catalysis depends on histidine 151, which acts as the Proton acceptor. A Nuclear localization signal motif is present at residues 206–213 (TRRFVFPA). The active-site Proton acceptor is aspartate 359.

This sequence belongs to the plant acyltransferase family. In terms of assembly, monomer.

The protein resides in the cytoplasm. The protein localises to the nucleus. The enzyme catalyses rhazimol + acetyl-CoA = akuammiline + CoA + H(+). It functions in the pathway alkaloid biosynthesis. Functionally, acyltransferase involved in the biosynthesis of akuammilan monoterpene indole alkaloids (MIAs) natural products, components with various biological properties such as antidiabetic, antibacterial, anti-inflammatory, anticancer, and antimalarial activities. Catalyzes the conversion of rhazimol to akuammiline. The sequence is that of Akuammiline synthase 1 from Alstonia scholaris (Dogbane).